The sequence spans 228 residues: MLLPIPDVLTPAQLSQLSERLDAADWADGRITAGHQSAQAKDNAQLPEDSPIAREASALVLDALSRSSTFFSAALPRRIYPPLFNRYSGGQSFGYHVDNAVRYDRSRGGADPVRTDVSATLFLSDPDSYDGGELVIEDTYGTQSVKLPAGHLVIYPGTSLHKVMPVTRGTRVASFFWIQSMLRNDAQRRLLFELDVSIRRLTQDTPGHPSLIQLTGVYHNLLRQWADV.

Residues 78-180 (RIYPPLFNRY…RVASFFWIQS (103 aa)) enclose the Fe2OG dioxygenase domain. 3 residues coordinate Fe cation: His-96, Asp-98, and His-161. Arg-171 is a 2-oxoglutarate binding site.

It depends on Fe(2+) as a cofactor. L-ascorbate serves as cofactor.

The polypeptide is PKHD-type hydroxylase XC_1340 (Xanthomonas campestris pv. campestris (strain 8004)).